A 503-amino-acid polypeptide reads, in one-letter code: MKTVILLVFLWGLSCALPVARYHNTESESSEERTGDLAGSPPPPTNSESSEESQASPEGQANSDHTDSSESGEELGYDRGQYRPAGGLSKSTGTGADKEDDEDDSGDDTFGDEDNDLGPEEGQWGGPSKLDSDEDSTDTTQSSEDSTSQENSAQDTPSDSKDHDSEDEADSRPEAGDSTQDSESEEQRVGGGSEGESSHGDGSEFDDEGMQSDDPESTRSDRGHARMSSAGIRSEESKGDHEPTSTQDSDDSQSVEFSSRKSFRRSHVSEEDYRGELTDSNSRETQSDSTEDTASKEESRSESQEDTAESQSQEDSPEGQDPSSESSEEAGEPSQESSSESQEGVTSESRGDNPDNTSQAGDQEDSESSEEDSLNTFSSSESQSTEEQADSESNESLSLSEESQESAQDGDSSSQEGLQSQSASTESRSQESQSEQDSRSEEDSDSQDSSRSKEESNSTGSASSSEEDIRPKNMEADSRKLIVDAYHNKPIGDQDDNDCQDGY.

The first 16 residues, 1-16 (MKTVILLVFLWGLSCA), serve as a signal peptide directing secretion. Residues 23 to 35 (HNTESESSEERTG) are compositionally biased toward basic and acidic residues. The disordered stretch occupies residues 23–503 (HNTESESSEE…QDDNDCQDGY (481 aa)). Over residues 54-63 (QASPEGQANS) the composition is skewed to polar residues. Residues 98-119 (KEDDEDDSGDDTFGDEDNDLGP) are compositionally biased toward acidic residues. Low complexity predominate over residues 138 to 150 (DTTQSSEDSTSQE). Residues 158–175 (SDSKDHDSEDEADSRPEA) are compositionally biased toward basic and acidic residues. Residues 203 to 215 (SEFDDEGMQSDDP) are compositionally biased toward acidic residues. Composition is skewed to basic and acidic residues over residues 233–243 (RSEESKGDHEP), 267–286 (HVSE…RETQ), and 293–303 (TASKEESRSES). The span at 332–348 (EPSQESSSESQEGVTSE) shows a compositional bias: low complexity. The Cell attachment site signature appears at 350-352 (RGD). N-linked (GlcNAc...) asparagine glycosylation occurs at N356. Residues 362–373 (DQEDSESSEEDS) show a composition bias toward acidic residues. The N-linked (GlcNAc...) asparagine glycan is linked to N394. Polar residues predominate over residues 407–418 (AQDGDSSSQEGL). Low complexity predominate over residues 419–435 (QSQSASTESRSQESQSE). N-linked (GlcNAc...) asparagine glycosylation is present at N457. Residues 467–492 (EDIRPKNMEADSRKLIVDAYHNKPIG) show a composition bias toward basic and acidic residues. Over residues 493–503 (DQDDNDCQDGY) the composition is skewed to acidic residues.

In terms of assembly, interacts with importin alpha. Post-translationally, phosphorylated in the cytosol and extracellular matrix and unphosphorylated in the nucleus. Phosphorylation is necessary for nucleocytoplasmic transport and may be catalyzed by a nuclear isoform of CK2 and can be augmented by calcium. Phosphorylated (in vitro) by FAM20C in the extracellular medium at sites within the S-x-E/pS motif. In terms of tissue distribution, expressed in tooth particularly in odontoblast, ameloblast and cementoblast. Also expressed in bone particularly in osteoblast.

The protein resides in the nucleus. It localises to the cytoplasm. It is found in the secreted. The protein localises to the extracellular space. Its subcellular location is the extracellular matrix. Functionally, may have a dual function during osteoblast differentiation. In the nucleus of undifferentiated osteoblasts, unphosphorylated form acts as a transcriptional component for activation of osteoblast-specific genes like osteocalcin. During the osteoblast to osteocyte transition phase it is phosphorylated and exported into the extracellular matrix, where it regulates nucleation of hydroxyapatite. The polypeptide is Dentin matrix acidic phosphoprotein 1 (Mus musculus (Mouse)).